A 443-amino-acid chain; its full sequence is Differentially expressed in FDCP 8 homolog B (443 aa).

The disordered stretch occupies residues 14 to 49; it reads HLNPFDKKGGAERHPADSETQPCKDSSTSSPLSVPE. Basic and acidic residues predominate over residues 17-30; it reads PFDKKGGAERHPAD. Positions 31–45 are enriched in polar residues; the sequence is SETQPCKDSSTSSPL. 2 Phorbol-ester/DAG-type zinc fingers span residues 134-185 and 364-424; these read EHRF…TKPC and IHTT…STSC.

Belongs to the DEF8 family.

Functionally, positively regulates lysosome peripheral distribution and ruffled border formation in osteoclasts. Involved in bone resorption. In Xenopus laevis (African clawed frog), this protein is Differentially expressed in FDCP 8 homolog B (def8-b).